Here is a 207-residue protein sequence, read N- to C-terminus: Anthranilate synthase component II (207 aa).

The Glutamine amidotransferase type-1 domain maps to 17-207; that stretch reads RVLFVDNFDS…DVIRNFLAGL (191 aa). Position 66–68 (66–68) interacts with L-glutamine; that stretch reads GPG. Residue cysteine 96 is the Nucleophile; for GATase activity of the active site. 146 to 147 is an L-glutamine binding site; that stretch reads SL. Active-site residues include histidine 187 and glutamate 189.

In terms of assembly, tetramer of two components I and two components II.

It carries out the reaction chorismate + L-glutamine = anthranilate + pyruvate + L-glutamate + H(+). The protein operates within amino-acid biosynthesis; L-tryptophan biosynthesis; L-tryptophan from chorismate: step 1/5. The protein is Anthranilate synthase component II (trpG1) of Haloarcula marismortui (strain ATCC 43049 / DSM 3752 / JCM 8966 / VKM B-1809) (Halobacterium marismortui).